We begin with the raw amino-acid sequence, 314 residues long: Ferrochelatase (314 aa).

Positions 184 and 259 each coordinate Fe cation.

The protein belongs to the ferrochelatase family.

Its subcellular location is the cytoplasm. The enzyme catalyses heme b + 2 H(+) = protoporphyrin IX + Fe(2+). Its pathway is porphyrin-containing compound metabolism; protoheme biosynthesis; protoheme from protoporphyrin-IX: step 1/1. In terms of biological role, catalyzes the ferrous insertion into protoporphyrin IX. This is Ferrochelatase from Chlamydia trachomatis serovar L2 (strain ATCC VR-902B / DSM 19102 / 434/Bu).